The primary structure comprises 640 residues: MGKIIGIDLGTTNSCVAVMQGTQPTVIENSEGYRTTPSMVAFTKNGERLIGHAAKRQAITNAKNTVFSIKRFMGRKFDEVPNEKKIAPYKVVNINGEARVEIDDKNYSPQEISAMILQKMKQTAEDFLGEKVTEAVITVPAYFNDAQRQATKDAGKIAGLEVKRIINEPTAAALAYGLDKKKENEKVAVFDLGGGTFDISILELGDGVFEVKSTDGDTHLGGDDFDQTIIDFLADEFKKQEGIDLRTDAIALQRLKEAAEKAKIELSSRTDTEINLPFITATQEGPKHLVVNLTRAKFEALASTLFDNIMAPCKRAIKNAKVNISEIDEVVLVGGSTRIPKVQELVKELFKREPNKSVNPDEVVAVGAAIQGGVLTGEVSDVLLLDVTPLSLGIETLGGVMTKLIEANTTIPTKKQEVFSTAADNQTSVEVHVLQGERPMASDNKTLGRFHLGDIPPAPRGMPQVEVAFDIDANGILHVSAKDKATGKEQSIRIEAGGKLNDAEIEKMKNDAKAHAEEDAKRKEEVETKNAADSLIFSTEKQLQELGDKIPADKKAPLESALDRLKEAHKSGSADAIKPAMDEVNTIWNDIASQLYQAADAPGSGTPNPEAESGKQESSGKTDGQVDAEYEVIDGNDKDK.

A Phosphothreonine; by autocatalysis modification is found at Thr196. 2 disordered regions span residues 510–530 and 598–640; these read NDAK…ETKN and AADA…DKDK.

This sequence belongs to the heat shock protein 70 family.

Its function is as follows. Acts as a chaperone. In Prosthecochloris aestuarii (strain DSM 271 / SK 413), this protein is Chaperone protein DnaK.